The chain runs to 302 residues: Geranylgeranyl diphosphate synthase (302 aa).

Isopentenyl diphosphate-binding residues include Lys-53, Arg-56, and His-87. Asp-94 and Asp-100 together coordinate Mg(2+). Arg-105 is a (2E,6E)-farnesyl diphosphate binding site. Isopentenyl diphosphate is bound at residue Arg-106. Residues Lys-189, Thr-190, and Gln-227 each coordinate (2E,6E)-farnesyl diphosphate.

It belongs to the FPP/GGPP synthase family. Requires Mg(2+) as cofactor.

It catalyses the reaction isopentenyl diphosphate + (2E,6E)-farnesyl diphosphate = (2E,6E,10E)-geranylgeranyl diphosphate + diphosphate. The protein operates within isoprenoid biosynthesis; geranylgeranyl diphosphate biosynthesis; geranylgeranyl diphosphate from farnesyl diphosphate and isopentenyl diphosphate: step 1/1. Its function is as follows. Catalyzes the condensation of farnesyl diphosphate (FPP) and isopentenyl diphosphate (IPP) to yield geranylgeranyl diphosphate (GGPP) needed for biosynthesis of carotenoids and diterpenes. The protein is Geranylgeranyl diphosphate synthase (crtE) of Pantoea ananas (Erwinia uredovora).